An 88-amino-acid chain; its full sequence is Putative membrane protein insertion efficiency factor (88 aa).

Residues 68-88 (VPPKKDKNADSEHSCKVHHHH) form a disordered region. Positions 69 to 82 (PPKKDKNADSEHSC) are enriched in basic and acidic residues.

This sequence belongs to the UPF0161 family.

Its subcellular location is the cell membrane. Could be involved in insertion of integral membrane proteins into the membrane. The protein is Putative membrane protein insertion efficiency factor of Listeria monocytogenes serovar 1/2a (strain ATCC BAA-679 / EGD-e).